The chain runs to 491 residues: Glutamyl-tRNA(Gln) amidotransferase subunit A (491 aa).

Catalysis depends on charge relay system residues K79 and S154. Catalysis depends on S178, which acts as the Acyl-ester intermediate.

The protein belongs to the amidase family. GatA subfamily. As to quaternary structure, heterotrimer of A, B and C subunits.

The catalysed reaction is L-glutamyl-tRNA(Gln) + L-glutamine + ATP + H2O = L-glutaminyl-tRNA(Gln) + L-glutamate + ADP + phosphate + H(+). Allows the formation of correctly charged Gln-tRNA(Gln) through the transamidation of misacylated Glu-tRNA(Gln) in organisms which lack glutaminyl-tRNA synthetase. The reaction takes place in the presence of glutamine and ATP through an activated gamma-phospho-Glu-tRNA(Gln). The protein is Glutamyl-tRNA(Gln) amidotransferase subunit A of Synechococcus sp. (strain CC9605).